The following is a 530-amino-acid chain: Transcription factor SPT20 homolog (530 aa).

Ser-296 bears the Phosphoserine mark. Residues 419–530 (CPVKMSHSSS…PASSSQRHES (112 aa)) form a disordered region. 2 stretches are compositionally biased toward low complexity: residues 424 to 436 (SHSS…LNSG) and 466 to 475 (SSSGNSSSGN). The residue at position 490 (Thr-490) is a Phosphothreonine. Low complexity predominate over residues 514 to 530 (LSPAALSPASSSQRHES). A phosphoserine mark is found at Ser-515 and Ser-520.

Belongs to the SPT20 family. Interacts with ATG9A. Interacts with MAPK14.

Its function is as follows. Required for MAP kinase p38 (MAPK11, MAPK12, MAPK13 and/or MAPK14) activation during gastrulation. Required for down-regulation of E-cadherin during gastrulation by regulating E-cadherin protein level downstream from NCK-interacting kinase (NIK) and independently of the regulation of transcription by FGF signaling and Snail. Required for starvation-induced ATG9A trafficking during autophagy. The chain is Transcription factor SPT20 homolog (Supt20h) from Rattus norvegicus (Rat).